Reading from the N-terminus, the 1117-residue chain is Reverse gyrase (1117 aa).

The RG N-terminal-type zinc finger occupies 3–42 (LATGAKYYHSCINCGGINTDTRNEKGLPCEVCLPFEDGDV). Zn(2+)-binding residues include Cys13, Cys16, Cys31, and Cys34. Residues Gln84 and 101 to 108 (APTGVGKT) contribute to the ATP site. A Helicase ATP-binding domain is found at 88-284 (AKRLLLSKSF…LFRELLGFEI (197 aa)). The DEAD box motif lies at 206 to 209 (DDVD). Residues 551 to 1117 (KDMKSRMIIV…EELNEILIKN (567 aa)) are topoisomerase I. The Toprim domain occupies 555 to 712 (SRMIIVESPT…NVQRIEMHEI (158 aa)). A Mg(2+)-binding site is contributed by Glu561. The segment at 631 to 658 (IKRCSSCGAQFTDELPRCPYCNSDKIDD) adopts an RG C-terminal-type zinc-finger fold. The Zn(2+) site is built by Cys634, Cys637, Cys648, and Cys651. Asp681 serves as a coordination point for Mg(2+). The Topo IA-type catalytic domain occupies 728–1114 (DVNLVKSQIV…NLYEELNEIL (387 aa)). The O-(5'-phospho-DNA)-tyrosine intermediate role is filled by Tyr864.

This sequence in the N-terminal section; belongs to the DEAD box helicase family. DDVD subfamily. The protein in the C-terminal section; belongs to the type IA topoisomerase family. As to quaternary structure, monomer. Zn(2+) is required as a cofactor. It depends on Mg(2+) as a cofactor.

The protein localises to the cytoplasm. The enzyme catalyses ATP + H2O = ADP + phosphate + H(+). Its function is as follows. Modifies the topological state of DNA by introducing positive supercoils in an ATP-dependent process, increasing the linking number in steps of +1; also positively supercoils with dATP and ATP-gamma-S. With UTP or dTTP relaxes negatively supercoiled DNA, in the absence of any nucleotide partially relaxes negative supercoils. In the absence of nucleotide has a higher affinity for dsDNA with a single-stranded tail than dsDNA or ssDNA. Has an ATPase activity in the absence of DNA. Binds to single-stranded DNA, transiently cleaves and then rejoins the ends, introducing a positive supercoil in the process. The scissile phosphodiester is attacked by the catalytic tyrosine of the enzyme, resulting in the formation of a DNA-(5'-phosphotyrosyl)-enzyme intermediate. Probably involved in rewinding DNA strands in regions of the chromosome that have opened up to allow replication, transcription, DNA repair and/or for DNA protection. The sequence is that of Reverse gyrase from Caldanaerobacter subterraneus subsp. tengcongensis (strain DSM 15242 / JCM 11007 / NBRC 100824 / MB4) (Thermoanaerobacter tengcongensis).